The sequence spans 466 residues: Asparagine--tRNA ligase (466 aa).

Belongs to the class-II aminoacyl-tRNA synthetase family. In terms of assembly, homodimer.

The protein resides in the cytoplasm. It catalyses the reaction tRNA(Asn) + L-asparagine + ATP = L-asparaginyl-tRNA(Asn) + AMP + diphosphate + H(+). The protein is Asparagine--tRNA ligase of Photobacterium profundum (strain SS9).